The following is a 209-amino-acid chain: Kynurenine formamidase (209 aa).

Residue tryptophan 20 participates in substrate binding. Residues histidine 50, histidine 54, and aspartate 56 each contribute to the Zn(2+) site. The active-site Proton donor/acceptor is histidine 60. Residues histidine 161 and glutamate 173 each contribute to the Zn(2+) site.

This sequence belongs to the Cyclase 1 superfamily. KynB family. As to quaternary structure, homodimer. Requires Zn(2+) as cofactor.

It catalyses the reaction N-formyl-L-kynurenine + H2O = L-kynurenine + formate + H(+). Its pathway is amino-acid degradation; L-tryptophan degradation via kynurenine pathway; L-kynurenine from L-tryptophan: step 2/2. Catalyzes the hydrolysis of N-formyl-L-kynurenine to L-kynurenine, the second step in the kynurenine pathway of tryptophan degradation. This chain is Kynurenine formamidase, found in Bacillus cereus (strain ATCC 10987 / NRS 248).